We begin with the raw amino-acid sequence, 282 residues long: GDT1-like protein 4 (282 aa).

The first 26 residues, 1-26 (MARRVSTTRLLLLLLLVAAAAAAAAA), serve as a signal peptide directing secretion. A run of 6 helical transmembrane segments spans residues 67-87 (AGLG…VSEI), 106-126 (TVLS…TGLG), 138-158 (TNSA…YIAW), 189-209 (IFSR…FLAE), 227-247 (AVGV…FAVV), and 259-279 (GTVA…SYFY).

This sequence belongs to the GDT1 family.

It is found in the membrane. In Oryza sativa subsp. japonica (Rice), this protein is GDT1-like protein 4.